The sequence spans 1295 residues: Phosphoribosylformylglycinamidine synthase (1295 aa).

The segment at 305–327 (WPGAATGSGGEIRDEGATGRGAK) is disordered. ATP contacts are provided by residues 307–318 (GAATGSGGEIRD) and alanine 678. Mg(2+) contacts are provided by glutamate 718, asparagine 722, and aspartate 884. Serine 886 serves as a coordination point for ATP. In terms of domain architecture, Glutamine amidotransferase type-1 spans 1042-1295 (VAVLREQGVN…IFRNARKQLG (254 aa)). The active-site Nucleophile is the cysteine 1135. Residues histidine 1260 and glutamate 1262 contribute to the active site.

This sequence in the N-terminal section; belongs to the FGAMS family. In terms of assembly, monomer. In terms of processing, both N-terminus methionine truncation and retention have been observed for this protein.

The protein resides in the cytoplasm. The enzyme catalyses N(2)-formyl-N(1)-(5-phospho-beta-D-ribosyl)glycinamide + L-glutamine + ATP + H2O = 2-formamido-N(1)-(5-O-phospho-beta-D-ribosyl)acetamidine + L-glutamate + ADP + phosphate + H(+). It functions in the pathway purine metabolism; IMP biosynthesis via de novo pathway; 5-amino-1-(5-phospho-D-ribosyl)imidazole from N(2)-formyl-N(1)-(5-phospho-D-ribosyl)glycinamide: step 1/2. Phosphoribosylformylglycinamidine synthase involved in the purines biosynthetic pathway. Catalyzes the ATP-dependent conversion of formylglycinamide ribonucleotide (FGAR) and glutamine to yield formylglycinamidine ribonucleotide (FGAM) and glutamate. This chain is Phosphoribosylformylglycinamidine synthase, found in Escherichia coli (strain K12).